The following is a 598-amino-acid chain: Elongation factor 4 (598 aa).

The tr-type G domain maps to 2 to 184 (NNIRNFAIIA…AIVTKLPAPQ (183 aa)). Residues 14 to 19 (DHGKST) and 131 to 134 (NKVD) each bind GTP.

This sequence belongs to the TRAFAC class translation factor GTPase superfamily. Classic translation factor GTPase family. LepA subfamily.

It localises to the cell membrane. It catalyses the reaction GTP + H2O = GDP + phosphate + H(+). Functionally, required for accurate and efficient protein synthesis under certain stress conditions. May act as a fidelity factor of the translation reaction, by catalyzing a one-codon backward translocation of tRNAs on improperly translocated ribosomes. Back-translocation proceeds from a post-translocation (POST) complex to a pre-translocation (PRE) complex, thus giving elongation factor G a second chance to translocate the tRNAs correctly. Binds to ribosomes in a GTP-dependent manner. The chain is Elongation factor 4 from Wolbachia pipientis subsp. Culex pipiens (strain wPip).